We begin with the raw amino-acid sequence, 180 residues long: Acireductone dioxygenase 1 (180 aa).

His82, His84, Glu88, and His127 together coordinate Fe(2+). His82, His84, Glu88, and His127 together coordinate Ni(2+).

The protein belongs to the acireductone dioxygenase (ARD) family. Fe(2+) is required as a cofactor. The cofactor is Ni(2+).

The protein localises to the cytoplasm. It is found in the nucleus. The enzyme catalyses 1,2-dihydroxy-5-(methylsulfanyl)pent-1-en-3-one + O2 = 4-methylsulfanyl-2-oxobutanoate + formate + 2 H(+). The catalysed reaction is 1,2-dihydroxy-5-(methylsulfanyl)pent-1-en-3-one + O2 = 3-(methylsulfanyl)propanoate + CO + formate + 2 H(+). It functions in the pathway amino-acid biosynthesis; L-methionine biosynthesis via salvage pathway; L-methionine from S-methyl-5-thio-alpha-D-ribose 1-phosphate: step 5/6. Functionally, catalyzes 2 different reactions between oxygen and the acireductone 1,2-dihydroxy-3-keto-5-methylthiopentene (DHK-MTPene) depending upon the metal bound in the active site. Fe-containing acireductone dioxygenase (Fe-ARD) produces formate and 2-keto-4-methylthiobutyrate (KMTB), the alpha-ketoacid precursor of methionine in the methionine recycle pathway. Ni-containing acireductone dioxygenase (Ni-ARD) produces methylthiopropionate, carbon monoxide and formate, and does not lie on the methionine recycle pathway. The chain is Acireductone dioxygenase 1 from Sorghum bicolor (Sorghum).